The following is a 314-amino-acid chain: tRNA uridine(34) hydroxylase (314 aa).

One can recognise a Rhodanese domain in the interval 140–234 (SRDDVILVDT…YLEETPAEES (95 aa)). C194 functions as the Cysteine persulfide intermediate in the catalytic mechanism.

The protein belongs to the TrhO family.

It carries out the reaction uridine(34) in tRNA + AH2 + O2 = 5-hydroxyuridine(34) in tRNA + A + H2O. In terms of biological role, catalyzes oxygen-dependent 5-hydroxyuridine (ho5U) modification at position 34 in tRNAs. This Acinetobacter baylyi (strain ATCC 33305 / BD413 / ADP1) protein is tRNA uridine(34) hydroxylase.